A 549-amino-acid chain; its full sequence is Chaperonin GroEL (549 aa).

Residues 29–32 (TLGP), Lys50, 86–90 (DGTTT), Gly414, 477–479 (NAL), and Asp493 each bind ATP.

This sequence belongs to the chaperonin (HSP60) family. Forms a cylinder of 14 subunits composed of two heptameric rings stacked back-to-back. Interacts with the co-chaperonin GroES.

The protein resides in the cytoplasm. The enzyme catalyses ATP + H2O + a folded polypeptide = ADP + phosphate + an unfolded polypeptide.. Together with its co-chaperonin GroES, plays an essential role in assisting protein folding. The GroEL-GroES system forms a nano-cage that allows encapsulation of the non-native substrate proteins and provides a physical environment optimized to promote and accelerate protein folding. The chain is Chaperonin GroEL from Leptospira biflexa serovar Patoc (strain Patoc 1 / Ames).